Reading from the N-terminus, the 339-residue chain is Ketol-acid reductoisomerase (NADP(+)) (339 aa).

A KARI N-terminal Rossmann domain is found at 1 to 182 (MRVYYDRDAD…GGGRSGVIET (182 aa)). NADP(+) contacts are provided by residues 24-27 (YGSQ), Arg-48, Ser-51, Thr-53, and 83-86 (DELQ). Residue His-108 is part of the active site. Gly-134 contacts NADP(+). Positions 183-328 (TFKEECETDL…GKLRAMMPWI (146 aa)) constitute a KARI C-terminal knotted domain. Asp-191, Glu-195, Glu-227, and Glu-231 together coordinate Mg(2+). Ser-252 lines the substrate pocket.

Belongs to the ketol-acid reductoisomerase family. Mg(2+) is required as a cofactor.

The catalysed reaction is (2R)-2,3-dihydroxy-3-methylbutanoate + NADP(+) = (2S)-2-acetolactate + NADPH + H(+). It carries out the reaction (2R,3R)-2,3-dihydroxy-3-methylpentanoate + NADP(+) = (S)-2-ethyl-2-hydroxy-3-oxobutanoate + NADPH + H(+). Its pathway is amino-acid biosynthesis; L-isoleucine biosynthesis; L-isoleucine from 2-oxobutanoate: step 2/4. It functions in the pathway amino-acid biosynthesis; L-valine biosynthesis; L-valine from pyruvate: step 2/4. Involved in the biosynthesis of branched-chain amino acids (BCAA). Catalyzes an alkyl-migration followed by a ketol-acid reduction of (S)-2-acetolactate (S2AL) to yield (R)-2,3-dihydroxy-isovalerate. In the isomerase reaction, S2AL is rearranged via a Mg-dependent methyl migration to produce 3-hydroxy-3-methyl-2-ketobutyrate (HMKB). In the reductase reaction, this 2-ketoacid undergoes a metal-dependent reduction by NADPH to yield (R)-2,3-dihydroxy-isovalerate. This chain is Ketol-acid reductoisomerase (NADP(+)), found in Brucella canis (strain ATCC 23365 / NCTC 10854 / RM-666).